A 207-amino-acid chain; its full sequence is dITP/XTP pyrophosphatase (207 aa).

7-12 (SNNAKK) contributes to the substrate binding site. Catalysis depends on aspartate 72, which acts as the Proton acceptor. Aspartate 72 serves as a coordination point for Mg(2+). Residues serine 73, 155 to 158 (FGYD), lysine 184, and 189 to 190 (HR) contribute to the substrate site.

Belongs to the HAM1 NTPase family. As to quaternary structure, homodimer. Requires Mg(2+) as cofactor.

It catalyses the reaction XTP + H2O = XMP + diphosphate + H(+). The catalysed reaction is dITP + H2O = dIMP + diphosphate + H(+). The enzyme catalyses ITP + H2O = IMP + diphosphate + H(+). In terms of biological role, pyrophosphatase that catalyzes the hydrolysis of nucleoside triphosphates to their monophosphate derivatives, with a high preference for the non-canonical purine nucleotides XTP (xanthosine triphosphate), dITP (deoxyinosine triphosphate) and ITP. Seems to function as a house-cleaning enzyme that removes non-canonical purine nucleotides from the nucleotide pool, thus preventing their incorporation into DNA/RNA and avoiding chromosomal lesions. In Corynebacterium efficiens (strain DSM 44549 / YS-314 / AJ 12310 / JCM 11189 / NBRC 100395), this protein is dITP/XTP pyrophosphatase.